The following is a 503-amino-acid chain: MFGDRQRPMVLVLGLGESGLAIARWCARHGCRLRIADTREAPPNLAALQAEGIDAEFVGGPFTPALLDGGIDIVGLSPGLSPLEPALAALLAAASERAIAVWGELEFFAQALRALGTSGYQPKVLAITGTNGKTTTTSLTGLLCQRAGKKVAVAGNISPAMLDRLASAIDETALPDVWVLELSSFQLETARTFAPDAAAILNITQDHLDWHGSFDAYAAAKGRIFGATTTRVLNRDDAAVMKFAPAAGAADAARTVTFGLGEPTRDGDYGLSRDNGIAWLVEAIDRDAPDETTTTRRRKRDGAHTPDIAHKRLMPVDALRIRGLHNAANALAAFALARAIDLPAAPLLHALREYRGEAHRVEVIATIDDVDYVDDSKGTNVGATVAALDGLAQKIVLIAGGDGKGQDFAPLVAPVARWCRAVMLIGRDAPALRATLADTGVPLADHATLEGAVRAAAELAEPGDAVLLSPACASLDMFRNYAHRADVFRAAVDEIAIDKGATP.

129–135 provides a ligand contact to ATP; sequence GTNGKTT.

The protein belongs to the MurCDEF family.

The protein resides in the cytoplasm. It carries out the reaction UDP-N-acetyl-alpha-D-muramoyl-L-alanine + D-glutamate + ATP = UDP-N-acetyl-alpha-D-muramoyl-L-alanyl-D-glutamate + ADP + phosphate + H(+). It participates in cell wall biogenesis; peptidoglycan biosynthesis. In terms of biological role, cell wall formation. Catalyzes the addition of glutamate to the nucleotide precursor UDP-N-acetylmuramoyl-L-alanine (UMA). In Burkholderia vietnamiensis (strain G4 / LMG 22486) (Burkholderia cepacia (strain R1808)), this protein is UDP-N-acetylmuramoylalanine--D-glutamate ligase.